Here is a 51-residue protein sequence, read N- to C-terminus: Insulin (51 aa).

3 cysteine pairs are disulfide-bonded: C7/C37, C19/C50, and C36/C41.

It belongs to the insulin family. As to quaternary structure, heterodimer of a B chain and an A chain linked by two disulfide bonds.

It localises to the secreted. Its function is as follows. Insulin decreases blood glucose concentration. It increases cell permeability to monosaccharides, amino acids and fatty acids. It accelerates glycolysis, the pentose phosphate cycle, and glycogen synthesis in liver. This chain is Insulin (INS), found in Alligator mississippiensis (American alligator).